The chain runs to 1033 residues: Isoleucine--tRNA ligase 2 (1033 aa).

A 'HIGH' region motif is present at residues 47 to 57 (PTANGLPHVGH). The short motif at 590–594 (KMSKS) is the 'KMSKS' region element. Lysine 593 serves as a coordination point for ATP.

This sequence belongs to the class-I aminoacyl-tRNA synthetase family. IleS type 2 subfamily. Monomer. It depends on Zn(2+) as a cofactor.

The protein resides in the cytoplasm. It carries out the reaction tRNA(Ile) + L-isoleucine + ATP = L-isoleucyl-tRNA(Ile) + AMP + diphosphate. In terms of biological role, catalyzes the attachment of isoleucine to tRNA(Ile). As IleRS can inadvertently accommodate and process structurally similar amino acids such as valine, to avoid such errors it has two additional distinct tRNA(Ile)-dependent editing activities. One activity is designated as 'pretransfer' editing and involves the hydrolysis of activated Val-AMP. The other activity is designated 'posttransfer' editing and involves deacylation of mischarged Val-tRNA(Ile). The polypeptide is Isoleucine--tRNA ligase 2 (Bacillus anthracis).